Consider the following 215-residue polypeptide: Probable phosphoglycerate mutase GpmB (215 aa).

Residues 8 to 15 (RHGESEWN), 21 to 22 (QG), Arg-58, Arg-60, 82 to 85 (ELHM), and 151 to 152 (GI) each bind substrate. His-9 functions as the Tele-phosphohistidine intermediate in the catalytic mechanism. Glu-82 (proton donor/acceptor) is an active-site residue.

The protein belongs to the phosphoglycerate mutase family. GpmB subfamily.

The catalysed reaction is (2R)-2-phosphoglycerate = (2R)-3-phosphoglycerate. It participates in carbohydrate degradation; glycolysis; pyruvate from D-glyceraldehyde 3-phosphate: step 3/5. The polypeptide is Probable phosphoglycerate mutase GpmB (Photorhabdus laumondii subsp. laumondii (strain DSM 15139 / CIP 105565 / TT01) (Photorhabdus luminescens subsp. laumondii)).